We begin with the raw amino-acid sequence, 717 residues long: Probable E3 ubiquitin-protein ligase WAVH2 (717 aa).

Composition is skewed to polar residues over residues 13–28 (VSSN…SLHT) and 85–94 (RTTSNATPRT). Positions 13 to 120 (VSSNQDKPQQ…SSSSSSSQGG (108 aa)) are disordered. Residues 95-117 (SNSSSPKFFSNPSSPKSSSSSSS) show a composition bias toward low complexity. Residues 140-184 (CAICLQRVNSNQSNSTAAIFTAECSHSFHLSCVNGLEDKRCPFCS) form an RING-type; atypical zinc finger. Residues 326-456 (DLVTVLDLSN…LNATRIPFVV (131 aa)) form the VWFA domain.

In terms of tissue distribution, expressed in root tips, cotyledons, leaf primordia and hypocotyls.

The catalysed reaction is S-ubiquitinyl-[E2 ubiquitin-conjugating enzyme]-L-cysteine + [acceptor protein]-L-lysine = [E2 ubiquitin-conjugating enzyme]-L-cysteine + N(6)-ubiquitinyl-[acceptor protein]-L-lysine.. Functionally, probable E3 ubiquitin-protein ligase involved in the regulation of root growth. Acts as a positive regulator of root gravitropism. The protein is Probable E3 ubiquitin-protein ligase WAVH2 of Arabidopsis thaliana (Mouse-ear cress).